A 138-amino-acid chain; its full sequence is Cysteine desulfuration protein SufE (138 aa).

The active-site Cysteine persulfide intermediate is cysteine 51.

It belongs to the SufE family. Homodimer. Interacts with SufS.

The protein localises to the cytoplasm. The protein operates within cofactor biosynthesis; iron-sulfur cluster biosynthesis. Functionally, participates in cysteine desulfuration mediated by SufS. Cysteine desulfuration mobilizes sulfur from L-cysteine to yield L-alanine and constitutes an essential step in sulfur metabolism for biosynthesis of a variety of sulfur-containing biomolecules. Functions as a sulfur acceptor for SufS, by mediating the direct transfer of the sulfur atom from the S-sulfanylcysteine of SufS, an intermediate product of cysteine desulfuration process. The polypeptide is Cysteine desulfuration protein SufE (Klebsiella pneumoniae (strain 342)).